We begin with the raw amino-acid sequence, 344 residues long: Heat-inducible transcription repressor HrcA (344 aa).

It belongs to the HrcA family.

Functionally, negative regulator of class I heat shock genes (grpE-dnaK-dnaJ and groELS operons). Prevents heat-shock induction of these operons. In Geobacillus stearothermophilus (Bacillus stearothermophilus), this protein is Heat-inducible transcription repressor HrcA.